Reading from the N-terminus, the 463-residue chain is Heterogeneous nuclear ribonucleoprotein K (463 aa).

M1 is modified (N-acetylmethionine). A disordered region spans residues 1–37; it reads METEQPEETFPNTETNGEFGKRPAEDMEEEQAFKRSR. A necessary for interaction with DDX1 region spans residues 1–276; sequence METEQPEETF…GRGGRPMPPS (276 aa). A compositionally biased stretch (basic and acidic residues) spans 19 to 37; the sequence is FGKRPAEDMEEEQAFKRSR. K34 is modified (N6-acetyllysine; alternate). K34 participates in a covalent cross-link: Glycyl lysine isopeptide (Lys-Gly) (interchain with G-Cter in SUMO1); alternate. Residue K34 forms a Glycyl lysine isopeptide (Lys-Gly) (interchain with G-Cter in SUMO2); alternate linkage. The segment at 35–197 is interaction with ASFV p30; the sequence is RSRNTDEMVE…STDRVVLIGG (163 aa). Phosphoserine is present on S36. T39 carries the phosphothreonine modification. The KH 1 domain maps to 42 to 104; the sequence is MVELRILLQS…ETIGEILKKI (63 aa). Residues K52 and K60 each participate in a glycyl lysine isopeptide (Lys-Gly) (interchain with G-Cter in SUMO2) cross-link. 2 repeat units span residues 54–76 and 59–62. The interval 54–421 is 2 X 22 AA approximate repeats; it reads AGAVIGKGGK…QIRHESGASI (368 aa). The segment at 59 to 407 is 5 X 4 AA repeats of G-X-G-G; it reads GKGGKNIKAL…LAGSIIGKGG (349 aa). Residues S75 and S116 each carry the phosphoserine modification. One can recognise a KH 2 domain in the interval 144 to 209; that stretch reads DCELRLLIHQ…DRVVECIKII (66 aa). K163 participates in a covalent cross-link: Glycyl lysine isopeptide (Lys-Gly) (interchain with G-Cter in SUMO1); alternate. Residue K163 forms a Glycyl lysine isopeptide (Lys-Gly) (interchain with G-Cter in SUMO2); alternate linkage. At K198 the chain carries N6-acetyllysine. The interval 209 to 337 is interaction with ZIK1; that stretch reads ILDLISESPI…RPGDRYDGMV (129 aa). Phosphoserine is present on residues S214 and S216. Residue K219 forms a Glycyl lysine isopeptide (Lys-Gly) (interchain with G-Cter in SUMO2); alternate linkage. Position 219 is an N6-succinyllysine; alternate (K219). Residues 236 to 273 are RNA-binding RGG-box; sequence YGGFTMMFDDRRGRPVGFPMRGRGGFDRMPPGRGGRPM. A run of 3 repeats spans residues 245 to 250, 257 to 260, and 267 to 270. The segment at 245–329 is 2 X 6 AA approximate repeats; it reads DRRGRPVGFP…LMAYDRRGRP (85 aa). A disordered region spans residues 250 to 329; that stretch reads PVGFPMRGRG…LMAYDRRGRP (80 aa). Low complexity predominate over residues 252–266; that stretch reads GFPMRGRGGFDRMPP. Positions 276 to 285 are enriched in basic and acidic residues; sequence SRRDYDDMSP. A Phosphoserine modification is found at S284. One copy of the 3-4 repeat lies at 295-298; that stretch reads GRGG. R316 is modified (omega-N-methylarginine). Residues 324-329 form a 2-2 repeat; the sequence is DRRGRP. R377 carries the omega-N-methylarginine modification. Position 379 is a phosphoserine (S379). Y380 is modified (phosphotyrosine). Positions 387 to 451 constitute a KH 3 domain; that stretch reads IITTQVTIPK…DQIQNAQYLL (65 aa). A run of 2 repeats spans residues 399-421 and 404-407. K405 carries the N6-acetyllysine; alternate modification. K405 is covalently cross-linked (Glycyl lysine isopeptide (Lys-Gly) (interchain with G-Cter in SUMO2); alternate). S420 carries the post-translational modification Phosphoserine. A Glycyl lysine isopeptide (Lys-Gly) (interchain with G-Cter in SUMO1); alternate cross-link involves residue K422. Residue K422 forms a Glycyl lysine isopeptide (Lys-Gly) (interchain with G-Cter in SUMO2); alternate linkage. A Glycyl lysine isopeptide (Lys-Gly) (interchain with G-Cter in SUMO); alternate cross-link involves residue K422.

Identified in the spliceosome C complex. Part of a transcription inhibitory ribonucleoprotein complex composed at least of the circular RNA circZNF827, ZNF827 and HNRNPL. Interacts with RBM42 and ZIK1. Interacts with BRDT. Interacts with ANKRD28. Interacts with ASFV p30 protein. Interacts with DDX1. Interacts with MDM2; this interaction leads to ubiquitination and proteasomal degradation. Interacts with p53/TP53. Interacts with IVNS1ABP (via BACK domain); the interaction is direct. Interacts with PPIA/CYPA. In terms of assembly, (Microbial infection) Interacts with HCV core protein. In terms of processing, arg-296 and Arg-299 are dimethylated, probably to asymmetric dimethylarginine. Sumoylated by CBX4. Sumoylation is increased upon DNA damage, such as that produced by doxorubicin, etoposide, UV light and camptothecin, due to enhanced CBX4 phosphorylation by HIPK2 under these conditions. Post-translationally, ubiquitinated by MDM2. Doxorubicin treatment does not affect monoubiquitination, but slightly decreases HNRNPK poly-ubiquitination. In terms of processing, O-glycosylated (O-GlcNAcylated), in a cell cycle-dependent manner.

It is found in the cytoplasm. The protein resides in the nucleus. It localises to the nucleoplasm. Its subcellular location is the cell projection. The protein localises to the podosome. Functionally, one of the major pre-mRNA-binding proteins. Binds tenaciously to poly(C) sequences. Likely to play a role in the nuclear metabolism of hnRNAs, particularly for pre-mRNAs that contain cytidine-rich sequences. Can also bind poly(C) single-stranded DNA. Plays an important role in p53/TP53 response to DNA damage, acting at the level of both transcription activation and repression. When sumoylated, acts as a transcriptional coactivator of p53/TP53, playing a role in p21/CDKN1A and 14-3-3 sigma/SFN induction. As far as transcription repression is concerned, acts by interacting with long intergenic RNA p21 (lincRNA-p21), a non-coding RNA induced by p53/TP53. This interaction is necessary for the induction of apoptosis, but not cell cycle arrest. As part of a ribonucleoprotein complex composed at least of ZNF827, HNRNPL and the circular RNA circZNF827 that nucleates the complex on chromatin, may negatively regulate the transcription of genes involved in neuronal differentiation. The protein is Heterogeneous nuclear ribonucleoprotein K (HNRNPK) of Homo sapiens (Human).